The chain runs to 263 residues: MAKSLVLSSLLLALLLAAPLASLADNNVLLTGDVLHTDNQLSFESAAFVMQGDCNLVLYNEAGGFQSNTHGRGVGCTLTLNNLGQLEIHSANSNTPVWVSPRNINTVQGNYAAVLGPDQHVTIYGPAIWSTPAPNRHERRATVSDIPRVRNVLFSSQVMSDNAQLATRDYSLVMRDDCNLALTKGGQTNIVWESGTSGRGQHCFMRLGHTGLIEISDDRLNSVWRSNTVGQEGDYVLILQINGQAVVYGPAVWSTASSASAAL.

The signal sequence occupies residues 1–24 (MAKSLVLSSLLLALLLAAPLASLA). Bulb-type lectin domains follow at residues 26-136 (NNVL…APNR) and 150-260 (RNVL…SSAS). Intrachain disulfides connect cysteine 54-cysteine 76 and cysteine 178-cysteine 203.

In terms of assembly, heterotetramer of 2 domain 1 and 2 domain 2 chains arranged as a dimer of domain 1/domain 2 heterodimers.

In terms of biological role, mannose-specific lectin. Has weak agglutinating activity towards trypsin-treated erythrocytes from rabbit but not from human. This is Mannose-specific lectin 2 from Crocus vernus (Dutch crocus).